The primary structure comprises 354 residues: Biotin synthase (354 aa).

The region spanning 41–268 is the Radical SAM core domain; the sequence is NEVQISRLLS…LSRVRLSAGR (228 aa). [4Fe-4S] cluster-binding residues include Cys-56, Cys-60, and Cys-63. 4 residues coordinate [2Fe-2S] cluster: Cys-100, Cys-131, Cys-191, and Arg-263.

The protein belongs to the radical SAM superfamily. Biotin synthase family. In terms of assembly, homodimer. It depends on [4Fe-4S] cluster as a cofactor. [2Fe-2S] cluster is required as a cofactor.

The catalysed reaction is (4R,5S)-dethiobiotin + (sulfur carrier)-SH + 2 reduced [2Fe-2S]-[ferredoxin] + 2 S-adenosyl-L-methionine = (sulfur carrier)-H + biotin + 2 5'-deoxyadenosine + 2 L-methionine + 2 oxidized [2Fe-2S]-[ferredoxin]. Its pathway is cofactor biosynthesis; biotin biosynthesis; biotin from 7,8-diaminononanoate: step 2/2. Its function is as follows. Catalyzes the conversion of dethiobiotin (DTB) to biotin by the insertion of a sulfur atom into dethiobiotin via a radical-based mechanism. In Shewanella amazonensis (strain ATCC BAA-1098 / SB2B), this protein is Biotin synthase.